The chain runs to 496 residues: Endoglucanase (496 aa).

The signal sequence occupies residues 1–23; it reads MGYHSVFIAVFLWSSMVCHNGLA. The Nucleophile role is filled by Asp93. Active-site residues include His415, Asp467, and Glu476.

It belongs to the glycosyl hydrolase 9 (cellulase E) family.

It carries out the reaction Endohydrolysis of (1-&gt;4)-beta-D-glucosidic linkages in cellulose, lichenin and cereal beta-D-glucans.. Functionally, involved in ripening fruit process. This is Endoglucanase from Phaseolus vulgaris (Kidney bean).